We begin with the raw amino-acid sequence, 354 residues long: Protein-arginine kinase (354 aa).

Positions 24-254 constitute a Phosphagen kinase C-terminal domain; sequence IVLSSRIRLA…QQIIQQEKMA (231 aa). ATP-binding positions include 27–31, H92, R125, 176–180, and 207–212; these read SSRIR, RASVM, and RGIYGE. An RDXXRA motif of the pArg binding pocket involved in allosteric regulation motif is present at residues 337–342; sequence RDYRRA.

Belongs to the ATP:guanido phosphotransferase family.

The enzyme catalyses L-arginyl-[protein] + ATP = N(omega)-phospho-L-arginyl-[protein] + ADP + H(+). With respect to regulation, appears to be allosterically activated by the binding of pArg-containing polypeptides to the pArg-binding pocket localized in the C-terminal domain of McsB. Its function is as follows. Catalyzes the specific phosphorylation of arginine residues in a large number of proteins. Is part of the bacterial stress response system. Protein arginine phosphorylation has a physiologically important role and is involved in the regulation of many critical cellular processes, such as protein homeostasis, motility, competence, and stringent and stress responses, by regulating gene expression and protein activity. The chain is Protein-arginine kinase from Bacillus cereus (strain G9842).